Reading from the N-terminus, the 180-residue chain is Centromere protein M (180 aa).

As to quaternary structure, component of the CENPA-NAC complex, at least composed of CENPA, CENPC, CENPH, CENPM, CENPN, CENPT and CENPU. The CENPA-NAC complex interacts with the CENPA-CAD complex, composed of CENPI, CENPK, CENPL, CENPO, CENPP, CENPQ, CENPR and CENPS.

The protein resides in the nucleus. It is found in the cytoplasm. It localises to the chromosome. The protein localises to the centromere. Its subcellular location is the kinetochore. In terms of biological role, component of the CENPA-NAC (nucleosome-associated) complex, a complex that plays a central role in assembly of kinetochore proteins, mitotic progression and chromosome segregation. The CENPA-NAC complex recruits the CENPA-CAD (nucleosome distal) complex and may be involved in incorporation of newly synthesized CENPA into centromeres. This Bos taurus (Bovine) protein is Centromere protein M (CENPM).